We begin with the raw amino-acid sequence, 676 residues long: DNA ligase (676 aa).

The segment covering 1–10 (MTQAHHDDAG) has biased composition (basic and acidic residues). Positions 1-23 (MTQAHHDDAGARNALQGGLATDP) are disordered. NAD(+) contacts are provided by residues 52–56 (DAAFD) and 95–96 (SL). The N6-AMP-lysine intermediate role is filled by K148. Residues R169, E203, and K330 each coordinate NAD(+). Zn(2+)-binding residues include C420, C423, C436, and C441. Positions 593–676 (EAEGPLAGLT…DKLIAERRGG (84 aa)) constitute a BRCT domain.

It belongs to the NAD-dependent DNA ligase family. LigA subfamily. It depends on Mg(2+) as a cofactor. Requires Mn(2+) as cofactor.

The enzyme catalyses NAD(+) + (deoxyribonucleotide)n-3'-hydroxyl + 5'-phospho-(deoxyribonucleotide)m = (deoxyribonucleotide)n+m + AMP + beta-nicotinamide D-nucleotide.. Functionally, DNA ligase that catalyzes the formation of phosphodiester linkages between 5'-phosphoryl and 3'-hydroxyl groups in double-stranded DNA using NAD as a coenzyme and as the energy source for the reaction. It is essential for DNA replication and repair of damaged DNA. The polypeptide is DNA ligase (Sorangium cellulosum (strain So ce56) (Polyangium cellulosum (strain So ce56))).